Reading from the N-terminus, the 214-residue chain is MRIILLGAPGAGKGTQAQYLMDKYGIPQISTGDMLRAAIKEGTPLGLEAKKVMDAGQLISDDIIIGLVKERITKADCENGFLLDGFPRTIPQADAMKENGVVVDHVIEFDVADEVIVERMGGRRVHPGSGRVYHVVYNPPKVADKDNETGEELIIRADDTEETVRKRLGIYHEQTMPLVDYYQAEAAAGNTQYHKLDGTQAVDAISKQLGELLG.

Position 10–15 (10–15 (GAGKGT)) interacts with ATP. Residues 30-59 (STGDMLRAAIKEGTPLGLEAKKVMDAGQLI) are NMP. AMP contacts are provided by residues Thr31, Arg36, 57–59 (QLI), 85–88 (GFPR), and Gln92. The tract at residues 122 to 159 (GRRVHPGSGRVYHVVYNPPKVADKDNETGEELIIRADD) is LID. ATP-binding positions include Arg123 and 132–133 (VY). AMP contacts are provided by Arg156 and Arg167. Gln200 lines the ATP pocket.

The protein belongs to the adenylate kinase family. As to quaternary structure, monomer.

It is found in the cytoplasm. The catalysed reaction is AMP + ATP = 2 ADP. It participates in purine metabolism; AMP biosynthesis via salvage pathway; AMP from ADP: step 1/1. Its function is as follows. Catalyzes the reversible transfer of the terminal phosphate group between ATP and AMP. Plays an important role in cellular energy homeostasis and in adenine nucleotide metabolism. The chain is Adenylate kinase from Pseudoalteromonas translucida (strain TAC 125).